The primary structure comprises 136 residues: Small ribosomal subunit protein bS6 (136 aa).

The disordered stretch occupies residues 96 to 136; sequence VTEPSALARSGSDAEADRAPADEGSVEAAGAEPGSEAEAEA.

This sequence belongs to the bacterial ribosomal protein bS6 family.

Functionally, binds together with bS18 to 16S ribosomal RNA. The polypeptide is Small ribosomal subunit protein bS6 (Methylococcus capsulatus (strain ATCC 33009 / NCIMB 11132 / Bath)).